The following is a 447-amino-acid chain: ATP-dependent protease ATPase subunit HslU (447 aa).

Residues Ile17 and 59–64 (GVGKTE) each bind ATP. Residues 136–160 (PPARGGFQGEPTAEEKPTEKKESAT) form a disordered region. Over residues 148–159 (AEEKPTEKKESA) the composition is skewed to basic and acidic residues. ATP is bound by residues Asp260, Glu325, and Arg397.

The protein belongs to the ClpX chaperone family. HslU subfamily. As to quaternary structure, a double ring-shaped homohexamer of HslV is capped on each side by a ring-shaped HslU homohexamer. The assembly of the HslU/HslV complex is dependent on binding of ATP.

The protein localises to the cytoplasm. Functionally, ATPase subunit of a proteasome-like degradation complex; this subunit has chaperone activity. The binding of ATP and its subsequent hydrolysis by HslU are essential for unfolding of protein substrates subsequently hydrolyzed by HslV. HslU recognizes the N-terminal part of its protein substrates and unfolds these before they are guided to HslV for hydrolysis. In Coxiella burnetii (strain Dugway 5J108-111), this protein is ATP-dependent protease ATPase subunit HslU.